Here is a 30-residue protein sequence, read N- to C-terminus: Brevinin-2Ej (30 aa).

Cysteines 24 and 30 form a disulfide.

As to expression, expressed by the skin glands.

It localises to the secreted. Shows antibacterial activity against representative Gram-negative and Gram-positive bacterial species, and hemolytic activity. This Pelophylax ridibundus (Marsh frog) protein is Brevinin-2Ej.